The primary structure comprises 232 residues: Large ribosomal subunit protein uL1 (232 aa).

The protein belongs to the universal ribosomal protein uL1 family. In terms of assembly, part of the 50S ribosomal subunit.

Binds directly to 23S rRNA. The L1 stalk is quite mobile in the ribosome, and is involved in E site tRNA release. Functionally, protein L1 is also a translational repressor protein, it controls the translation of the L11 operon by binding to its mRNA. The polypeptide is Large ribosomal subunit protein uL1 (Chlamydia trachomatis serovar L2b (strain UCH-1/proctitis)).